Consider the following 366-residue polypeptide: MFSLPRGFEPPAPEDLGRQSSAELRERLRRQERLLRNEKFICKLPDKGKKISDTVAKLKAAISEREEVRGRSELFHPVSVDCKLRQKATTRADTDVDKAQSSDLMLDTSSLDPDCSSIDIKSSKSTSETQGPTHLTHRGNEETLEAGYTVNSSPAAHIRARAPSSEVKEHLPQHSVSSQEEEISSSIDSLFITKLQKITIADQSEPSEENTSTENFPELQSETPKKPHYMKVLEMRARNPVPPPHKFKTNVLPTQQSDSPSHCQRGQSPASSEEQRRRARQHLDDITAARLLPLHHLPAQLLSIEESLALQREQKQNYEEMQAKLAAQKLAERLNIKMQSYNPEGESSGRYREVRDEADAQSSDEC.

Positions 1-23 are disordered; sequence MFSLPRGFEPPAPEDLGRQSSAE. Residues 15–39 adopt a coiled-coil conformation; the sequence is DLGRQSSAELRERLRRQERLLRNEK. An important for transcription repressor activity region spans residues 29 to 68; it reads RRQERLLRNEKFICKLPDKGKKISDTVAKLKAAISEREEV. 4 disordered regions span residues 88–140, 158–182, 201–225, and 237–280; these read ATTR…HRGN, IRARAPSSEVKEHLPQHSVSSQEEE, ADQSEPSEENTSTENFPELQSETPK, and ARNP…RRAR. Residues 90-100 show a composition bias toward basic and acidic residues; the sequence is TRADTDVDKAQ. The span at 101–127 shows a compositional bias: low complexity; sequence SSDLMLDTSSLDPDCSSIDIKSSKSTS. The tract at residues 225–296 is interaction with Pol II; the sequence is KKPHYMKVLE…TAARLLPLHH (72 aa). Residues 251-272 show a composition bias toward polar residues; the sequence is VLPTQQSDSPSHCQRGQSPASS. Position 268 is a phosphoserine (Ser268). Residues 297–312 are important for transcription repressor activity; it reads LPAQLLSIEESLALQR. Residues 299 to 333 are a coiled coil; sequence AQLLSIEESLALQREQKQNYEEMQAKLAAQKLAER. The interaction with Pol II stretch occupies residues 313–338; the sequence is EQKQNYEEMQAKLAAQKLAERLNIKM. Positions 338–366 are disordered; sequence MQSYNPEGESSGRYREVRDEADAQSSDEC. Residues 347–358 are compositionally biased toward basic and acidic residues; sequence SSGRYREVRDEA.

This sequence belongs to the GRINL1 family. In terms of assembly, component of the Pol II(G) complex, which contains the RNA polymerase II (Pol II) core complex subunits and POLR2M isoform 1. Pol II(G) appears to be an abundant form of Pol II. Post-translationally, dephosphorylated at Ser-268 by the PNUTS-PP1 complex, promoting RNA polymerase II transcription pause-release.

The protein resides in the nucleus. Appears to be a stable component of the Pol II(G) complex form of RNA polymerase II (Pol II). Pol II synthesizes mRNA precursors and many functional non-coding RNAs and is the central component of the basal RNA polymerase II transcription machinery. May play a role in the Mediator complex-dependent regulation of transcription activation. Acts as a negative regulator of transcriptional activation; this repression is relieved by the Mediator complex, which restores Pol II(G) activator-dependent transcription to a level equivalent to that of Pol II. The chain is DNA-directed RNA polymerase II subunit GRINL1A (Polr2m) from Mus musculus (Mouse).